The sequence spans 219 residues: Large ribosomal subunit protein uL1 (219 aa).

It belongs to the universal ribosomal protein uL1 family. As to quaternary structure, part of the 50S ribosomal subunit.

In terms of biological role, binds directly to 23S rRNA. Probably involved in E site tRNA release. Functionally, protein L1 is also a translational repressor protein, it controls the translation of its operon by binding to its mRNA. This Pyrococcus horikoshii (strain ATCC 700860 / DSM 12428 / JCM 9974 / NBRC 100139 / OT-3) protein is Large ribosomal subunit protein uL1.